The primary structure comprises 509 residues: Poly(A) RNA polymerase GLD2-B (509 aa).

The segment at 88–125 (PGSPPSSFQNRKRRSDEGNSPYDVKRQRFQSPQEQTVN) is disordered. Residues 116–125 (FQSPQEQTVN) show a composition bias toward polar residues. The Mg(2+) site is built by D240 and D242. In terms of domain architecture, PAP-associated spans 409–462 (LGDLLLGFLKYFAVEFDWSKDIISLREAKALPRTDDYEWRNKYICVEEPFDGSN).

The protein belongs to the DNA polymerase type-B-like family. GLD2 subfamily. Component of a complex at least composed of cpeb1, cpsf1, tent2/gld2, pabpc1/ePAB, parn and sympk. Following oocyte maturation, parn is expelled from the complex. Interacts with rbfox2. Interacts with sympk. The cofactor is Mg(2+). It depends on Mn(2+) as a cofactor.

It is found in the cytoplasm. It catalyses the reaction RNA(n) + ATP = RNA(n)-3'-adenine ribonucleotide + diphosphate. Functionally, cytoplasmic poly(A) RNA polymerase that adds successive AMP monomers to the 3'-end of specific RNAs, forming a poly(A) tail. In contrast to the canonical nuclear poly(A) RNA polymerase, it only adds poly(A) to selected cytoplasmic mRNAs during oocyte maturation. Plays a central role during oocyte maturation by mediating polyadenylation of dormant mRNAs, which contain 5'AAUAAA-3' sequence in their 3'-UTR. In immature oocytes, polyadenylation of poly(A) tails is counteracted by the ribonuclease parn. During maturation parn is excluded from the ribonucleoprotein complex, allowing poly(A) elongation and activation of mRNAs. May not play a role in replication-dependent histone mRNA degradation. The sequence is that of Poly(A) RNA polymerase GLD2-B from Xenopus laevis (African clawed frog).